Here is a 428-residue protein sequence, read N- to C-terminus: MSAFIVLGAQWGDEGKGKMTDYLAEEAEVVVRFQGGNNAGHTVEVGDKQYKLHLIPSGILYDDKLNVIGNGVVVDPKALFEEINYLEGVGVNVTPEKLIISDRAQLIMPYHKTLDVLKEKARGKNDIGTTGKGIGPCYTDKFERCGIRVCDLMHEDVFKEKLEENIRMKNEYITKVLGGEPLSFSEILNEYLEFAKKLRPFVQDTSVKVYNNIKENKTVLFEGAQGMLLDIDYGTYPYVTSSNTTAGGVCSGIGIGPNMVTNAVGITKAYTTRVGKGPFPTELVDETGDWIREKGHEYGVTTGRSRRCGWLDLVIVKTAARVSGLTSLAVTKIDTLAGLEKLKVCVGYKFDGKVIDYFPASLEDLAKCEPVYEEFDGWDDSVAEARTYEELPENAKKYLNRIAEFTDTKISIIGVGPKREQTIRIDSI.

GTP is bound by residues 12–18 (GDEGKGK) and 40–42 (GHT). Asp13 acts as the Proton acceptor in catalysis. Positions 13 and 40 each coordinate Mg(2+). Residues 13 to 16 (DEGK), 38 to 41 (NAGH), Thr130, Arg144, Gln225, Thr240, and Arg304 contribute to the IMP site. His41 serves as the catalytic Proton donor. 300-306 (VTTGRSR) contributes to the substrate binding site. GTP contacts are provided by residues Arg306, 332-334 (KID), and 414-416 (GVG).

It belongs to the adenylosuccinate synthetase family. Homodimer. Mg(2+) serves as cofactor.

The protein resides in the cytoplasm. It carries out the reaction IMP + L-aspartate + GTP = N(6)-(1,2-dicarboxyethyl)-AMP + GDP + phosphate + 2 H(+). It functions in the pathway purine metabolism; AMP biosynthesis via de novo pathway; AMP from IMP: step 1/2. In terms of biological role, plays an important role in the de novo pathway of purine nucleotide biosynthesis. Catalyzes the first committed step in the biosynthesis of AMP from IMP. This is Adenylosuccinate synthetase from Clostridium botulinum (strain Eklund 17B / Type B).